The primary structure comprises 436 residues: Glutamyl-tRNA reductase 2 (436 aa).

Residues 49–52 (TCNR), serine 106, 111–113 (EPQ), and glutamine 117 each bind substrate. The active-site Nucleophile is the cysteine 50. 186–191 (GAGKMC) is a binding site for NADP(+).

This sequence belongs to the glutamyl-tRNA reductase family. Homodimer.

The catalysed reaction is (S)-4-amino-5-oxopentanoate + tRNA(Glu) + NADP(+) = L-glutamyl-tRNA(Glu) + NADPH + H(+). It functions in the pathway porphyrin-containing compound metabolism; protoporphyrin-IX biosynthesis; 5-aminolevulinate from L-glutamyl-tRNA(Glu): step 1/2. In terms of biological role, catalyzes the NADPH-dependent reduction of glutamyl-tRNA(Glu) to glutamate 1-semialdehyde (GSA). This is Glutamyl-tRNA reductase 2 from Koribacter versatilis (strain Ellin345).